We begin with the raw amino-acid sequence, 820 residues long: Leucine--tRNA ligase (820 aa).

The short motif at 42 to 52 (PYPSGDLHMGH) is the 'HIGH' region element. Residues 576 to 580 (KMSKS) carry the 'KMSKS' region motif. ATP is bound at residue K579.

Belongs to the class-I aminoacyl-tRNA synthetase family.

The protein localises to the cytoplasm. The catalysed reaction is tRNA(Leu) + L-leucine + ATP = L-leucyl-tRNA(Leu) + AMP + diphosphate. This chain is Leucine--tRNA ligase, found in Coxiella burnetii (strain Dugway 5J108-111).